The following is a 75-amino-acid chain: Small ribosomal subunit protein bS16 (75 aa).

The protein belongs to the bacterial ribosomal protein bS16 family.

The protein is Small ribosomal subunit protein bS16 of Campylobacter fetus subsp. fetus (strain 82-40).